The following is a 398-amino-acid chain: Cytochrome b (398 aa).

A helical membrane pass occupies residues 45-65 (LGSIAGIALVIQIITGVILAM). Residues His95 and His109 each contribute to the heme b site. The next 9 membrane-spanning stretches (helical) occupy residues 96–116 (AVGA…GLYY), 129–149 (IGII…VLPW), 164–184 (FSAI…GFSV), 192–212 (FFAL…LHLV), 245–265 (FVGF…APNY), 277–297 (PLVT…YAIL), 304–324 (LGGV…PWLD), 339–359 (IAFW…SKPV), and 366–386 (ISRF…PLIG). His196 and His210 together coordinate heme b.

The protein belongs to the cytochrome b family. The main subunits of complex b-c1 are: cytochrome b, cytochrome c1 and the Rieske protein. Heme b serves as cofactor.

Its subcellular location is the cell membrane. Its function is as follows. Component of the ubiquinol-cytochrome c reductase complex (complex III or cytochrome b-c1 complex), which is a respiratory chain that generates an electrochemical potential coupled to ATP synthesis. The sequence is that of Cytochrome b (petB) from Rickettsia prowazekii (strain Madrid E).